The sequence spans 404 residues: Cytochrome P450 monooxygenase avaI (404 aa).

Cysteine 382 lines the heme pocket.

This sequence belongs to the cytochrome P450 family. The cofactor is heme.

It participates in secondary metabolite biosynthesis. Cytochrome P450 monooxygenase; part of the cluster that mediates the biosynthesis of a highly modified cyclo-arginine-tryptophan dipeptide (cRW). The first step of the pathway is perfornmed by the arginine-containing cyclodipeptide synthase (RCPDS) avaA that acts as the scaffold-generating enzyme and is responsible for formation of the cyclo-Arg-Trp (cRW) diketopiperazine. AvaB then acts as a multifunctional flavoenzyme that is responsible for generating the cyclo-Arg-formylkynurenine DKP, which can be deformylated by avaC. AvaB then further catalyzes an additional N-oxidation followed by cyclization and dehydration. The next step is an N-acetylation of the guanidine group catalyzed by the arginine N-acetyltransferase avaD. The roles of the additional enzymes identified within the ava cluster still have to be determined. This is Cytochrome P450 monooxygenase avaI from Aspergillus versicolor.